A 68-amino-acid polypeptide reads, in one-letter code: Phage-like element PBSX protein XtrA (68 aa).

This sequence to B.subtilis YqaO.

This Bacillus subtilis (strain 168) protein is Phage-like element PBSX protein XtrA (xtrA).